We begin with the raw amino-acid sequence, 436 residues long: Histidinol dehydrogenase (436 aa).

Residues Tyr130, Gln191, and Asn214 each coordinate NAD(+). 3 residues coordinate substrate: Ser237, Gln259, and His262. Gln259 and His262 together coordinate Zn(2+). Catalysis depends on proton acceptor residues Glu327 and His328. Substrate contacts are provided by His328, Asp361, Glu415, and His420. Residue Asp361 participates in Zn(2+) binding. His420 lines the Zn(2+) pocket.

The protein belongs to the histidinol dehydrogenase family. Requires Zn(2+) as cofactor.

It carries out the reaction L-histidinol + 2 NAD(+) + H2O = L-histidine + 2 NADH + 3 H(+). Its pathway is amino-acid biosynthesis; L-histidine biosynthesis; L-histidine from 5-phospho-alpha-D-ribose 1-diphosphate: step 9/9. Catalyzes the sequential NAD-dependent oxidations of L-histidinol to L-histidinaldehyde and then to L-histidine. This chain is Histidinol dehydrogenase, found in Geobacter metallireducens (strain ATCC 53774 / DSM 7210 / GS-15).